The chain runs to 348 residues: Protein RecA (348 aa).

66–73 (GPESSGKT) lines the ATP pocket.

This sequence belongs to the RecA family.

Its subcellular location is the cytoplasm. Functionally, can catalyze the hydrolysis of ATP in the presence of single-stranded DNA, the ATP-dependent uptake of single-stranded DNA by duplex DNA, and the ATP-dependent hybridization of homologous single-stranded DNAs. It interacts with LexA causing its activation and leading to its autocatalytic cleavage. This is Protein RecA from Legionella pneumophila (strain Lens).